The chain runs to 422 residues: MVTIVLGSQWGDEGKGKITDLLSQKAELCCRSAGGHNAGHTIVHDDITYDFHILPSGLVSPTCVNLIGAGTVVHVPSFFKELASLDGKGLKDVRDRVFISDRAQVCFDLHAVVDGLEEAGLGTRKVGTTGKGIGPCYSDKAARRGVRIGDIMDEGVLESKLRSLEAGYRRRFGELDYNVEEEIARFKEYRSLLKPHIVDQLTLVKKFEDESASILVEGANALMLDIDYGTYPFVTSSCTGLGGAVQGVCLNPTSIKSIVGVVKAYCTRVGSGPFPTEQLNEVGEKLQVAGREFGVTTGRKRRCGWLDMVLLRYSARINHYTALNLTKLDILDDFDEIKVAVAYKLDGKELESFPASSDALEKVEIVYETLPGWKSTTMGVSKWEDLPVNAQKYVEYIEHSLGGVPIKWIGTGPARSHMIDRN.

GTP-binding positions include 11–17 (GDEGKGK) and 39–41 (GHT). The active-site Proton acceptor is Asp12. Mg(2+) is bound by residues Asp12 and Gly39. Residues 12–15 (DEGK), 37–40 (NAGH), Thr129, Arg143, Asn220, Thr235, and Arg299 contribute to the IMP site. Residue His40 is the Proton donor of the active site. 295–301 (VTTGRKR) lines the substrate pocket. GTP is bound by residues Arg301, 327–329 (KLD), and 410–412 (GTG).

This sequence belongs to the adenylosuccinate synthetase family. Homodimer. Mg(2+) is required as a cofactor.

Its subcellular location is the cytoplasm. The enzyme catalyses IMP + L-aspartate + GTP = N(6)-(1,2-dicarboxyethyl)-AMP + GDP + phosphate + 2 H(+). Its pathway is purine metabolism; AMP biosynthesis via de novo pathway; AMP from IMP: step 1/2. Its function is as follows. Plays an important role in the de novo pathway and in the salvage pathway of purine nucleotide biosynthesis. Catalyzes the first committed step in the biosynthesis of AMP from IMP. This Arthroderma otae (strain ATCC MYA-4605 / CBS 113480) (Microsporum canis) protein is Adenylosuccinate synthetase.